The sequence spans 148 residues: Large ribosomal subunit protein bL27m (148 aa).

The transit peptide at 1 to 30 (MAAAALTLRTRAAVTALLSPTAPTALAVRH) directs the protein to the mitochondrion. The tract at residues 28–48 (VRHASKKTGGSSKNLGGKSRG) is disordered.

This sequence belongs to the bacterial ribosomal protein bL27 family. In terms of assembly, component of the mitochondrial ribosome large subunit (39S) which comprises a 16S rRNA and about 50 distinct proteins.

It localises to the mitochondrion. The polypeptide is Large ribosomal subunit protein bL27m (Mrpl27) (Mus musculus (Mouse)).